Reading from the N-terminus, the 218-residue chain is Octanoyltransferase (218 aa).

Residues Ala31–Glu207 form the BPL/LPL catalytic domain. Residues Arg70–His77, Ser137–Gly139, and Gly150–Ala152 each bind substrate. Residue Cys168 is the Acyl-thioester intermediate of the active site.

The protein belongs to the LipB family.

The protein resides in the cytoplasm. The enzyme catalyses octanoyl-[ACP] + L-lysyl-[protein] = N(6)-octanoyl-L-lysyl-[protein] + holo-[ACP] + H(+). The protein operates within protein modification; protein lipoylation via endogenous pathway; protein N(6)-(lipoyl)lysine from octanoyl-[acyl-carrier-protein]: step 1/2. Functionally, catalyzes the transfer of endogenously produced octanoic acid from octanoyl-acyl-carrier-protein onto the lipoyl domains of lipoate-dependent enzymes. Lipoyl-ACP can also act as a substrate although octanoyl-ACP is likely to be the physiological substrate. This is Octanoyltransferase from Azotobacter vinelandii (strain DJ / ATCC BAA-1303).